The chain runs to 447 residues: N-succinylarginine dihydrolase (447 aa).

Substrate-binding positions include 19–28 (AGLSFGNEAS), asparagine 110, and 137–138 (HR). The active site involves glutamate 174. Arginine 212 is a substrate binding site. Histidine 248 is an active-site residue. Substrate contacts are provided by aspartate 250 and asparagine 359. Residue cysteine 365 is the Nucleophile of the active site.

The protein belongs to the succinylarginine dihydrolase family. As to quaternary structure, homodimer.

The catalysed reaction is N(2)-succinyl-L-arginine + 2 H2O + 2 H(+) = N(2)-succinyl-L-ornithine + 2 NH4(+) + CO2. It functions in the pathway amino-acid degradation; L-arginine degradation via AST pathway; L-glutamate and succinate from L-arginine: step 2/5. Catalyzes the hydrolysis of N(2)-succinylarginine into N(2)-succinylornithine, ammonia and CO(2). This Escherichia coli O81 (strain ED1a) protein is N-succinylarginine dihydrolase.